Here is a 450-residue protein sequence, read N- to C-terminus: Signal recognition particle 54 kDa protein (450 aa).

Residues 107–114 (GIQGSGKT), 188–192 (DTAGR), and 247–250 (TKLD) contribute to the GTP site.

Belongs to the GTP-binding SRP family. SRP54 subfamily. Part of the signal recognition particle protein translocation system, which is composed of SRP and FtsY. Archaeal SRP consists of a 7S RNA molecule of 300 nucleotides and two protein subunits: SRP54 and SRP19.

Its subcellular location is the cytoplasm. It carries out the reaction GTP + H2O = GDP + phosphate + H(+). Its function is as follows. Involved in targeting and insertion of nascent membrane proteins into the cytoplasmic membrane. Binds to the hydrophobic signal sequence of the ribosome-nascent chain (RNC) as it emerges from the ribosomes. The SRP-RNC complex is then targeted to the cytoplasmic membrane where it interacts with the SRP receptor FtsY. In Methanococcus vannielii (strain ATCC 35089 / DSM 1224 / JCM 13029 / OCM 148 / SB), this protein is Signal recognition particle 54 kDa protein.